An 84-amino-acid polypeptide reads, in one-letter code: Neurotoxin BM10-1-like (84 aa).

The signal sequence occupies residues 1–21 (MKTLLLTLVVVTIVCLDLGYT). 5 disulfides stabilise this stretch: Cys-24–Cys-47, Cys-27–Cys-32, Cys-40–Cys-64, Cys-68–Cys-76, and Cys-77–Cys-82.

This sequence belongs to the three-finger toxin family. Ancestral subfamily. Orphan group IV sub-subfamily. In terms of tissue distribution, expressed by the venom gland.

The protein localises to the secreted. In terms of biological role, binds and inhibits muscular and neuronal nicotinic acetylcholine receptors (nAChR). In Bungarus multicinctus (Many-banded krait), this protein is Neurotoxin BM10-1-like.